Here is a 987-residue protein sequence, read N- to C-terminus: Mitotic checkpoint serine/threonine-protein kinase bub-1 (987 aa).

Disordered stretches follow at residues Arg278 to Ser385 and Leu574 to Ser599. Residues Glu350–Pro364 show a composition bias toward basic and acidic residues. Low complexity predominate over residues Ser368–Ala380. The span at Ala575 to Ser587 shows a compositional bias: polar residues. The span at Ser588–Ser599 shows a compositional bias: basic and acidic residues. Positions Leu690–Lys987 constitute a Protein kinase domain. ATP contacts are provided by residues Ile696–Val704 and Lys718. The active-site Proton acceptor is Asp814.

Belongs to the protein kinase superfamily. Ser/Thr protein kinase family. BUB1 subfamily. In terms of assembly, interacts (via kinase domain) with mdf-1 (via coiled coil domain); the interaction recruits mdf-1 to unattached kinetochores during mitosis and between homologous chromosomes in early anaphase of meiosis I. May interact with bub-3; for localization at the kinetochore and the onset of anaphase.

The protein localises to the cytoplasm. It is found in the cell cortex. It localises to the nucleus. The protein resides in the chromosome. Its subcellular location is the centromere. The protein localises to the kinetochore. The enzyme catalyses L-seryl-[protein] + ATP = O-phospho-L-seryl-[protein] + ADP + H(+). The catalysed reaction is L-threonyl-[protein] + ATP = O-phospho-L-threonyl-[protein] + ADP + H(+). In terms of biological role, serine/threonine-protein kinase essential for spindle-assembly checkpoint signaling. Plays a key role in the recruitment of the checkpoint proteins bub-3, mdf-1 and mdf-2 to unattached kinetochores. mdf-1 recruitment is independent of bub-1 kinase activity. Has a role in the correct kinetochore localization of the spindly-like protein spdl-1. In addition, during meiotic anaphase I, controls the recruitment of hcp-1/2 and klp-19 to the ring-shaped domain formed between chromosomes. Involved in chromosome alignment, chromosome homolog segregation and spindle assembly. In association with bub-3 at the kinetochore region of chromosomes, promotes the onset on anaphase independently from spindle checkpoint signaling and promotes the formation of stable end-on bipolar attachments of chromosomes. Plays a role in nuclear envelope breakdown. Required maternally during embryogenesis and in the zygote for the postembryonic development of several tissues including ventral cord neurons, gonad, intestine and seam cells. In Caenorhabditis elegans, this protein is Mitotic checkpoint serine/threonine-protein kinase bub-1.